The following is a 305-amino-acid chain: Olfactory receptor 5M11 (305 aa).

The Extracellular segment spans residues 1–25 (MSNTNGSAITEFILLGLTDCPELQS). An N-linked (GlcNAc...) asparagine glycan is attached at Asn5. A helical membrane pass occupies residues 26-46 (LLFVLFLVVYLVTLLGNLGMI). At 47-54 (MLMRLDSR) the chain is on the cytoplasmic side. Residues 55-75 (LHTPMYFFLTNLAFVDLCYTS) form a helical membrane-spanning segment. Residues 76 to 98 (NATPQMSTNIVSEKTISFAGCFT) lie on the Extracellular side of the membrane. A disulfide bridge links Cys96 with Cys188. Residues 99 to 119 (QCYIFIALLLTEFYMLAAMAY) form a helical membrane-spanning segment. Over 120-138 (DRYVAIYDPLRYSVKTSRR) the chain is Cytoplasmic. A helical transmembrane segment spans residues 139–159 (VCICLATFPYVYGFSDGLFQA). The Extracellular portion of the chain corresponds to 160–195 (ILTFRLTFCRSSVINHFYCADPPLIKLSCSDTYVKE). The helical transmembrane segment at 196–216 (HAMFISAGFNLSSSLTIVLVS) threads the bilayer. The Cytoplasmic segment spans residues 217 to 236 (YAFILAAILRIKSAEGRHKA). The helical transmembrane segment at 237 to 257 (FSTCGSHMMAVTLFYGTLFCM) threads the bilayer. Residues 258–270 (YIRPPTDKTVEES) lie on the Extracellular side of the membrane. The helical transmembrane segment at 271–291 (KIIAVFYTFVSPVLNPLIYSL) threads the bilayer. The Cytoplasmic segment spans residues 292–305 (RNKDVKQALKNVLR).

The protein belongs to the G-protein coupled receptor 1 family.

The protein resides in the cell membrane. Odorant receptor. In Homo sapiens (Human), this protein is Olfactory receptor 5M11 (OR5M11).